The primary structure comprises 113 residues: uncharacterized protein (113 aa).

Residues 1–19 (MLSPLSPRIIAAFTTAVGA) form the signal peptide.

It to M.tuberculosis Rv1291c.

This is an uncharacterized protein from Mycobacterium tuberculosis (strain CDC 1551 / Oshkosh).